Here is a 516-residue protein sequence, read N- to C-terminus: MRLTVRLVDIAARGILLHHNDAKSLGVLAGDRIVISSPVTGKATVDYVETTGTLIDQGRIGVYHHTNEQLTLTENEVVEVRVADRPVSLDYIKKKMEGEKLTREDIRAIVADIVQDTLSPSEITAFVVSSYINQLDMDEIESLTRAMVETGDQLSFHAGPIVDKHSIGGVPGNKISLIVVPIIAASGLLIPKTSSRAITGAGGTADLMEVLAPVEFSASEVQEMTIKTGGVIVWGGATNIAPADDKIIIQEYPFKIDQIGQMIASVMAKKFAVGADVVAIDIPVGKYCKVHTIEEGKKLARQFIDLGERLNMRVECALTYGDAPVGRAIGPKLEIKEALSVLEGSDSPRSLIQKSCVIAGIALELAGKANRGEGANLALEILRSGKALKKFLDIIAVQGGTPDVSSEKITVGEHFYTVRADSTGYVIDLNNHSLITIARTAGAPADHGAGLYLHAKHGTSLSKGDPIFTIYADRKWRLEKAIEEARRLRPVMVEGMLIDRVPNVREWVPGRSRNLE.

AMP is bound by residues Gly169, 195–200 (SRAITG), and Thr204. The Proton donor role is filled by Asp257. Residues Ser265 and Lys289 each contribute to the AMP site.

This sequence belongs to the thymidine/pyrimidine-nucleoside phosphorylase family. Type 2 subfamily.

It catalyses the reaction AMP + phosphate = alpha-D-ribose 1,5-bisphosphate + adenine. It carries out the reaction CMP + phosphate = cytosine + alpha-D-ribose 1,5-bisphosphate. The enzyme catalyses UMP + phosphate = alpha-D-ribose 1,5-bisphosphate + uracil. Functionally, catalyzes the conversion of AMP and phosphate to adenine and ribose 1,5-bisphosphate (R15P). Exhibits phosphorylase activity toward CMP and UMP in addition to AMP. Functions in an archaeal AMP degradation pathway, together with R15P isomerase and RubisCO. The polypeptide is AMP phosphorylase (Methanospirillum hungatei JF-1 (strain ATCC 27890 / DSM 864 / NBRC 100397 / JF-1)).